We begin with the raw amino-acid sequence, 274 residues long: Large ribosomal subunit protein uL2 (274 aa).

Disordered stretches follow at residues 28–53 and 221–274; these read KPYAPLLEKNSKSGGRNNNGRITTRH and RGTA…RTKK. Positions 39 to 48 are enriched in low complexity; sequence KSGGRNNNGR. A compositionally biased stretch (basic residues) spans 253–274; sequence KGKKTRKNKRTEHFIVHRRTKK.

This sequence belongs to the universal ribosomal protein uL2 family. As to quaternary structure, part of the 50S ribosomal subunit. Forms a bridge to the 30S subunit in the 70S ribosome.

One of the primary rRNA binding proteins. Required for association of the 30S and 50S subunits to form the 70S ribosome, for tRNA binding and peptide bond formation. It has been suggested to have peptidyltransferase activity; this is somewhat controversial. Makes several contacts with the 16S rRNA in the 70S ribosome. This is Large ribosomal subunit protein uL2 from Proteus mirabilis (strain HI4320).